Consider the following 518-residue polypeptide: Protein translocase subunit SecD (518 aa).

A run of 6 helical transmembrane segments spans residues 9-29 (IVLSIICTVFAIICALPNFIQ), 356-376 (GKKAGLIGFVAVCIFMILSYG), 377-397 (VIGLFANIALILALLYILALL), 406-426 (LPGIAGIILTIGMAVDANVLI), 463-483 (LIVAFALYIFGVGAIKGFAVA), and 486-506 (IGIISSMFSAIIITKLLIDVW).

It belongs to the SecD/SecF family. SecD subfamily. Forms a complex with SecF. Part of the essential Sec protein translocation apparatus which comprises SecA, SecYEG and auxiliary proteins SecDF-YajC and YidC.

The protein resides in the cell inner membrane. Part of the Sec protein translocase complex. Interacts with the SecYEG preprotein conducting channel. SecDF uses the proton motive force (PMF) to complete protein translocation after the ATP-dependent function of SecA. This Rickettsia prowazekii (strain Madrid E) protein is Protein translocase subunit SecD.